The primary structure comprises 207 residues: Guanylate kinase (207 aa).

The 180-residue stretch at 6 to 185 (GLLIVLSGPS…AKNRIQCIVE (180 aa)) folds into the Guanylate kinase-like domain. 13 to 20 (GPSGVGKG) contacts ATP.

The protein belongs to the guanylate kinase family.

The protein localises to the cytoplasm. It catalyses the reaction GMP + ATP = GDP + ADP. Essential for recycling GMP and indirectly, cGMP. The sequence is that of Guanylate kinase from Staphylococcus aureus (strain Mu50 / ATCC 700699).